The primary structure comprises 619 residues: Laccase (619 aa).

Positions 1–21 are cleaved as a signal peptide; sequence MKFLGIAALVAGLLAPSLVLG. Residues 22 to 49 constitute a propeptide that is removed on maturation; the sequence is APAPGTEGVNLLTPVDKRQDSQAERYGG. A disulfide bridge connects residues Cys-55 and Cys-63. 2 Plastocyanin-like domains span residues 84–207 and 216–373; these read TRRY…IVIN and VDLG…LPTN. N-linked (GlcNAc...) asparagine glycosylation is present at Asn-139. 4 residues coordinate Cu cation: His-144, His-146, His-189, and His-191. 2 disulfides stabilise this stretch: Cys-165–Cys-586 and Cys-349–Cys-383. N-linked (GlcNAc...) asparagine glycans are attached at residues Asn-282, Asn-295, and Asn-340. N-linked (GlcNAc...) asparagine glycosylation is found at Asn-422 and Asn-444. One can recognise a Plastocyanin-like 3 domain in the interval 431-566; the sequence is NKPVLEYVLT…GGLSNQFLER (136 aa). Cu cation is bound by residues His-477, His-480, His-482, His-548, Cys-549, His-550, and His-554. Positions 607–619 are excised as a propeptide; sequence RSGVKAREVKMKW.

It belongs to the multicopper oxidase family. Cu cation serves as cofactor.

The protein resides in the secreted. It carries out the reaction 4 hydroquinone + O2 = 4 benzosemiquinone + 2 H2O. In terms of biological role, lignin degradation and detoxification of lignin-derived products. This is Laccase (lacc) from Neurospora crassa (strain ATCC 24698 / 74-OR23-1A / CBS 708.71 / DSM 1257 / FGSC 987).